We begin with the raw amino-acid sequence, 320 residues long: Fructose-1,6-bisphosphatase class 1 (320 aa).

Positions 84, 103, 105, and 106 each coordinate Mg(2+). Substrate is bound by residues 106–109, Asn196, and Lys262; that span reads DGSS. Glu268 contributes to the Mg(2+) binding site.

It belongs to the FBPase class 1 family. As to quaternary structure, homotetramer. Mg(2+) is required as a cofactor.

It localises to the cytoplasm. It catalyses the reaction beta-D-fructose 1,6-bisphosphate + H2O = beta-D-fructose 6-phosphate + phosphate. It participates in carbohydrate biosynthesis; gluconeogenesis. The sequence is that of Fructose-1,6-bisphosphatase class 1 from Shewanella amazonensis (strain ATCC BAA-1098 / SB2B).